We begin with the raw amino-acid sequence, 173 residues long: Large ribosomal subunit protein uL10 (173 aa).

It belongs to the universal ribosomal protein uL10 family. In terms of assembly, part of the ribosomal stalk of the 50S ribosomal subunit. The N-terminus interacts with L11 and the large rRNA to form the base of the stalk. The C-terminus forms an elongated spine to which L12 dimers bind in a sequential fashion forming a multimeric L10(L12)X complex.

Forms part of the ribosomal stalk, playing a central role in the interaction of the ribosome with GTP-bound translation factors. The chain is Large ribosomal subunit protein uL10 from Chlorobium phaeobacteroides (strain BS1).